A 136-amino-acid polypeptide reads, in one-letter code: uncharacterized protein (136 aa).

This is an uncharacterized protein from Frog virus 3 (isolate Goorha) (FV-3).